Reading from the N-terminus, the 568-residue chain is Autophagy-related protein 17 (568 aa).

2 disordered regions span residues 1–59 (MASF…DSSE) and 522–568 (SYEM…ERPF). Residues 522–546 (SYEMEAHGEPENEGKVETAYERETE) are compositionally biased toward basic and acidic residues.

This sequence belongs to the ATG17 family.

It is found in the cytoplasm. It localises to the preautophagosomal structure membrane. Its function is as follows. Autophagy-specific protein that functions in response to autophagy-inducing signals as a scaffold to recruit other ATG proteins to organize pre-autophagosomal structure (PAS) formation. Modulates the timing and magnitude of the autophagy response, such as the size of the sequestering vesicles. Plays particularly a role in pexophagy and nucleophagy. The polypeptide is Autophagy-related protein 17 (apg-9) (Neurospora crassa (strain ATCC 24698 / 74-OR23-1A / CBS 708.71 / DSM 1257 / FGSC 987)).